The following is a 593-amino-acid chain: MTADTAVSIPPYQVDDQDVIAELRARLGDDGFTLQATRTGMPVLWVSRERLLEVLKCLRHLPRPYVMLYDLHGVDERLRTQRRGLPDADFTVFYHLMSLERNSDLMVKVALSERDLNLPTATGIWPNANWYEREVWDLYGITFQGHPHLTRIMMPPTWEGHPLRKDYPARATEFDPFSLTLAKQQLEEEAARFRPEDWGMKRGGEHEDYMFLNLGPNHPSAHGAFRIILQLDGEEIVDCVPEIGYHHRGAEKMAERQSWHSFIPYTDRIDYLGGVMNNLPYVLAVEKLAGIKVPDRVDFIRVMLAEFFRITSHLLFLGTYIQDVGAMTPVFFTFTDRQRAYKVIEAITGFRLHPAWYRIGGVAHDLPRGWDKLVKEFVDWLPRRLDEYEKAALKNSILKARTIGVAQYNTKEALEWGTTGAGLRATGCDFDLRKARPYSGYEHFEFEVPLAANGDAYDRCMVRVEEMRQSIRIIDQCLKNMPEGPYKADHPLTTPPPKERTLQHIETLITHFLQVSWGPVMPAGEALQMIEATKGINSYYLTSDGSTMSYRTRIRTPSFAHLQQIPSVIRGSMVADLIAYLGSIDFVMADVDR.

The tract at residues 1–184 (MTADTAVSIP…DPFSLTLAKQ (184 aa)) is NADH dehydrogenase I subunit C. Residues 208–593 (DYMFLNLGPN…IDFVMADVDR (386 aa)) are NADH dehydrogenase I subunit D.

The protein in the N-terminal section; belongs to the complex I 30 kDa subunit family. It in the C-terminal section; belongs to the complex I 49 kDa subunit family. In terms of assembly, NDH-1 is composed of 13 different subunits. Subunits NuoB, CD, E, F, and G constitute the peripheral sector of the complex.

The protein localises to the cell inner membrane. It catalyses the reaction a quinone + NADH + 5 H(+)(in) = a quinol + NAD(+) + 4 H(+)(out). Its function is as follows. NDH-1 shuttles electrons from NADH, via FMN and iron-sulfur (Fe-S) centers, to quinones in the respiratory chain. The immediate electron acceptor for the enzyme in this species is believed to be ubiquinone. Couples the redox reaction to proton translocation (for every two electrons transferred, four hydrogen ions are translocated across the cytoplasmic membrane), and thus conserves the redox energy in a proton gradient. In Ectopseudomonas mendocina (strain ymp) (Pseudomonas mendocina), this protein is NADH-quinone oxidoreductase subunit C/D.